Here is a 307-residue protein sequence, read N- to C-terminus: F-box protein At2g23160 (307 aa).

The F-box domain occupies 2-49 (NSSSPISIDLIAEILSRVPSKSVARFRCVSKPWASMIRRPYFTELFLT).

This is F-box protein At2g23160 from Arabidopsis thaliana (Mouse-ear cress).